A 134-amino-acid polypeptide reads, in one-letter code: Ribonuclease VapC40 (134 aa).

One can recognise a PINc domain in the interval 3–126 (APDTSVLVAG…LRAVETYERL (124 aa)). Residues Asp-5 and Asp-98 each contribute to the Mg(2+) site.

It belongs to the PINc/VapC protein family. Mg(2+) serves as cofactor.

Its function is as follows. Toxic component of a type II toxin-antitoxin (TA) system. An RNase. Its cognate antitoxin is VapB40. In Mycobacterium tuberculosis (strain CDC 1551 / Oshkosh), this protein is Ribonuclease VapC40.